Reading from the N-terminus, the 145-residue chain is Large ribosomal subunit protein uL13 (145 aa).

This sequence belongs to the universal ribosomal protein uL13 family. Part of the 50S ribosomal subunit.

In terms of biological role, this protein is one of the early assembly proteins of the 50S ribosomal subunit, although it is not seen to bind rRNA by itself. It is important during the early stages of 50S assembly. The protein is Large ribosomal subunit protein uL13 of Geobacillus thermodenitrificans (strain NG80-2).